Consider the following 201-residue polypeptide: Superoxide dismutase [Mn] (201 aa).

The Mn(2+) site is built by histidine 27, histidine 81, aspartate 163, and histidine 167.

The protein belongs to the iron/manganese superoxide dismutase family. In terms of assembly, homodimer. Mn(2+) is required as a cofactor.

It is found in the secreted. It carries out the reaction 2 superoxide + 2 H(+) = H2O2 + O2. Destroys superoxide anion radicals which are normally produced within the cells and which are toxic to biological systems. The sequence is that of Superoxide dismutase [Mn] (sodA) from Streptococcus pyogenes serotype M18 (strain MGAS8232).